Here is a 354-residue protein sequence, read N- to C-terminus: Uroporphyrinogen decarboxylase (354 aa).

Residues 27–31, Asp77, Tyr154, Ser209, and His327 each bind substrate; that span reads RQAGR.

The protein belongs to the uroporphyrinogen decarboxylase family. In terms of assembly, homodimer.

It is found in the cytoplasm. It carries out the reaction uroporphyrinogen III + 4 H(+) = coproporphyrinogen III + 4 CO2. Its pathway is porphyrin-containing compound metabolism; protoporphyrin-IX biosynthesis; coproporphyrinogen-III from 5-aminolevulinate: step 4/4. Its function is as follows. Catalyzes the decarboxylation of four acetate groups of uroporphyrinogen-III to yield coproporphyrinogen-III. The protein is Uroporphyrinogen decarboxylase of Saccharophagus degradans (strain 2-40 / ATCC 43961 / DSM 17024).